A 391-amino-acid polypeptide reads, in one-letter code: tRNA-specific 2-thiouridylase MnmA (391 aa).

ATP contacts are provided by residues 9-16 and Met-35; that span reads GMSGGVDS. An interaction with target base in tRNA region spans residues 95 to 97; the sequence is NPD. Catalysis depends on Cys-100, which acts as the Nucleophile. Cys-100 and Cys-196 are disulfide-bonded. Gly-124 provides a ligand contact to ATP. Residues 146–148 form an interaction with tRNA region; it reads KDQ. The active-site Cysteine persulfide intermediate is the Cys-196. Positions 308-309 are interaction with tRNA; it reads RY.

This sequence belongs to the MnmA/TRMU family.

It localises to the cytoplasm. It carries out the reaction S-sulfanyl-L-cysteinyl-[protein] + uridine(34) in tRNA + AH2 + ATP = 2-thiouridine(34) in tRNA + L-cysteinyl-[protein] + A + AMP + diphosphate + H(+). In terms of biological role, catalyzes the 2-thiolation of uridine at the wobble position (U34) of tRNA, leading to the formation of s(2)U34. The chain is tRNA-specific 2-thiouridylase MnmA from Burkholderia orbicola (strain MC0-3).